The chain runs to 163 residues: MPSFDTVLETDLVKVKNAVENTAKEIGTRFDFKGTAASAELKEKDKEIILIGDGDFQIEQIHDILRNKLTKAGVDVRFLDIGKVEKIGGDKVKQITKVRDGIETEEAKKIQQLIKGNKMKVQAAIQEGKVRVTGAKRDDLQAAMALIRAEIKDLPLSFDNFRD.

Belongs to the YajQ family.

Functionally, nucleotide-binding protein. The chain is Nucleotide-binding protein Pnap_1080 from Polaromonas naphthalenivorans (strain CJ2).